The following is a 66-amino-acid chain: DNA gyrase inhibitor YacG (66 aa).

Residues cysteine 9, cysteine 12, cysteine 28, and cysteine 32 each coordinate Zn(2+).

It belongs to the DNA gyrase inhibitor YacG family. Interacts with GyrB. Zn(2+) serves as cofactor.

In terms of biological role, inhibits all the catalytic activities of DNA gyrase by preventing its interaction with DNA. Acts by binding directly to the C-terminal domain of GyrB, which probably disrupts DNA binding by the gyrase. This is DNA gyrase inhibitor YacG from Pseudomonas fluorescens (strain Pf0-1).